Reading from the N-terminus, the 601-residue chain is METINTTERLAALRDLMKKNKVDIYIVPSEDSHSSEYIAACDARREFISGFSGSAGCAVVTLDKAALATDDNWLLLKQGLQDVPTWQEWAAEQSESGKVVGVDSTIISAPDARKLLEKVKKRGGSDLVAVEENLVDLVWGDNRPSRPKEPVKVLARGFSGKDVKTKLEDLRKELQKKKSSGFIVSMLDEIAWLFNLRGSDIPYNPVFFSYASVTPSSATLYVDSSKLSEECITHLNDNGVSIREYSKIFSDVEVLSQSLDSEDAKLKKFLVSSRASWALKRALGGDAKVDEVRSPIGDAKSIKNETELEGMRACHIRDGAALIEYFAWLEHQLVVEKVEMDEVIAADKLEQLRSKQKHFVGLSFDTISSTGANAAVIHYKPEPGNCSIIDPKAVYLCDSGAQYFDGTTDTTRTLHFGEPTEMEKKAYTLVLKGNIALDVAVFPKGTSGFALDALARQFLWEEGLDYRHGTGHGVGSYLNVHEGPIGIGTRIQYSEVPLAPGNVISNEPGYYEDGSFGIRIENIIMVKEVETKHQFGDKPYLGFEHVTMVPYCRKLIDETLLTRREKHWLNEYHADIYSKTKDFFKGDELTMSWLEREIEPL.

Residues Asp-398, Asp-409, Glu-507, and Glu-521 each coordinate Mn(2+).

This sequence belongs to the peptidase M24B family. It depends on Mn(2+) as a cofactor.

The enzyme catalyses Release of any N-terminal amino acid, including proline, that is linked to proline, even from a dipeptide or tripeptide.. Functionally, catalyzes the removal of a penultimate prolyl residue from the N-termini of peptides. The chain is Probable Xaa-Pro aminopeptidase P (ampp) from Sclerotinia sclerotiorum (strain ATCC 18683 / 1980 / Ss-1) (White mold).